Reading from the N-terminus, the 943-residue chain is Isoleucine--tRNA ligase (943 aa).

Residues 59–69 (PYANGQIHLGH) carry the 'HIGH' region motif. Glu577 serves as a coordination point for L-isoleucyl-5'-AMP. A 'KMSKS' region motif is present at residues 618–622 (KMSKS). Residue Lys621 participates in ATP binding. 4 residues coordinate Zn(2+): Cys906, Cys909, Cys926, and Cys929.

This sequence belongs to the class-I aminoacyl-tRNA synthetase family. IleS type 1 subfamily. Monomer. Zn(2+) is required as a cofactor.

It localises to the cytoplasm. It catalyses the reaction tRNA(Ile) + L-isoleucine + ATP = L-isoleucyl-tRNA(Ile) + AMP + diphosphate. Functionally, catalyzes the attachment of isoleucine to tRNA(Ile). As IleRS can inadvertently accommodate and process structurally similar amino acids such as valine, to avoid such errors it has two additional distinct tRNA(Ile)-dependent editing activities. One activity is designated as 'pretransfer' editing and involves the hydrolysis of activated Val-AMP. The other activity is designated 'posttransfer' editing and involves deacylation of mischarged Val-tRNA(Ile). This is Isoleucine--tRNA ligase from Xanthomonas oryzae pv. oryzae (strain MAFF 311018).